A 209-amino-acid polypeptide reads, in one-letter code: Uracil phosphoribosyltransferase (209 aa).

5-phospho-alpha-D-ribose 1-diphosphate-binding positions include R79, R104, and 131-139 (DPMLATGGS). Residues I194 and 199 to 201 (GDA) contribute to the uracil site. D200 lines the 5-phospho-alpha-D-ribose 1-diphosphate pocket.

The protein belongs to the UPRTase family. The cofactor is Mg(2+).

The enzyme catalyses UMP + diphosphate = 5-phospho-alpha-D-ribose 1-diphosphate + uracil. It functions in the pathway pyrimidine metabolism; UMP biosynthesis via salvage pathway; UMP from uracil: step 1/1. Its activity is regulated as follows. Allosterically activated by GTP. Its function is as follows. Catalyzes the conversion of uracil and 5-phospho-alpha-D-ribose 1-diphosphate (PRPP) to UMP and diphosphate. The chain is Uracil phosphoribosyltransferase from Natranaerobius thermophilus (strain ATCC BAA-1301 / DSM 18059 / JW/NM-WN-LF).